The primary structure comprises 331 residues: UPF0324 membrane protein SAS0317 (331 aa).

Helical transmembrane passes span phenylalanine 9–alanine 26, isoleucine 31–tyrosine 48, leucine 69–glycine 88, leucine 93–leucine 115, alanine 122–phenylalanine 144, serine 154–phenylalanine 176, tyrosine 183–glycine 202, leucine 217–methionine 234, isoleucine 247–proline 269, leucine 273–valine 295, and leucine 308–tyrosine 330.

It belongs to the UPF0324 family.

Its subcellular location is the cell membrane. This is UPF0324 membrane protein SAS0317 from Staphylococcus aureus (strain MSSA476).